The primary structure comprises 592 residues: MNNGRIVRINGPLVVADNMKNAQMYEVVEVGEPRLIGEITRIEGDRAFIQVYEDTSGIKPNEPVYRTGAPLSIELGPGLIGKIFDGLQRPLDSIKELTKSPFIARGIKVPSVDRKTKWHFIPKVKKGDKIEGGDIIGIVNETPLVEHRILVPPYVHGTLKEIVAEGDYTVEDPIAVVDMNGDEVPIKLMQRWPVRIPRPFREKLEPTEPLLTGTRVLDTIFPIAKGGTAAIPGPFGSGKTVTLQSLAKWSAAKIVIYVGCGERGNEMTDELRQFPSLKDPWTGRPLLERTILVANTSNMPVAAREASIYVGITMAEYFRDQGYDTLLVADSTSRWAEALRDLGGRMEEMPAEEGFPSYLPSRLAEYYERAGRVKTVGKPERFGSVTVASAVSPPGGDFTEPVTSQTLRFVKVFWPLDVSLAQARHYPAINWLQGFSAYVDLVANWWNTNVDPKWREMRDMMVRTLIREDELRQIVRLVGPESLAEKDKLVLETARLIKEAFLKQNAYDDIDAFSSPQKQARVMRLIYLFNTHASRLVERGIPTKKIVDSMGQLLPEIIRSKAAIKNDELNKYDELERKLISVFENLEKEAGT.

233–240 contributes to the ATP binding site; it reads GPFGSGKT.

This sequence belongs to the ATPase alpha/beta chains family. As to quaternary structure, has multiple subunits with at least A(3), B(3), C, D, E, F, H, I and proteolipid K(x).

It is found in the cell membrane. It carries out the reaction ATP + H2O + 4 H(+)(in) = ADP + phosphate + 5 H(+)(out). Its function is as follows. Component of the A-type ATP synthase that produces ATP from ADP in the presence of a proton gradient across the membrane. The A chain is the catalytic subunit. The sequence is that of A-type ATP synthase subunit A from Saccharolobus islandicus (strain L.S.2.15 / Lassen #1) (Sulfolobus islandicus).